The following is a 79-amino-acid chain: Calcium/calmodulin-dependent protein kinase II inhibitor 2 (79 aa).

The tract at residues 1–21 (MSEILPYGEDKMGRFGADPEG) is disordered. The segment at 43 to 69 (KRPPKLGQIGRAKRVVIEDDRIDDVLK) is inhibitory domain.

It belongs to the CAMK2N family. In terms of assembly, interacts with CAMK2A and CAMK2B in the presence of Ca(2+)/calmodulin or after autophosphorylation.

It is found in the nucleus. It localises to the cytoplasm. The protein localises to the cytosol. Its subcellular location is the synapse. Its function is as follows. Potent and specific cellular inhibitor of CaM-kinase II (CAMK2). Traps Ca(2+)/calmodulin on CAMK2. This Mus musculus (Mouse) protein is Calcium/calmodulin-dependent protein kinase II inhibitor 2 (Camk2n2).